A 180-amino-acid chain; its full sequence is ATP-dependent protease subunit HslV (180 aa).

The active site involves T5. Residues G165, C168, and T171 each coordinate Na(+).

The protein belongs to the peptidase T1B family. HslV subfamily. In terms of assembly, a double ring-shaped homohexamer of HslV is capped on each side by a ring-shaped HslU homohexamer. The assembly of the HslU/HslV complex is dependent on binding of ATP.

It is found in the cytoplasm. It carries out the reaction ATP-dependent cleavage of peptide bonds with broad specificity.. With respect to regulation, allosterically activated by HslU binding. Functionally, protease subunit of a proteasome-like degradation complex believed to be a general protein degrading machinery. This is ATP-dependent protease subunit HslV from Helicobacter pylori (strain J99 / ATCC 700824) (Campylobacter pylori J99).